The chain runs to 176 residues: Disulfide bond formation protein B (176 aa).

Over Met1–Ser13 the chain is Cytoplasmic. A helical membrane pass occupies residues Trp14–Phe30. At Phe31–Val48 the chain is on the periplasmic side. A disulfide bridge links Cys40 with Cys43. A helical membrane pass occupies residues Ala49–Pro64. Residues Gln65–Trp71 lie on the Cytoplasmic side of the membrane. The chain crosses the membrane as a helical span at residues Ala72–Ile89. Residues Glu90 to Gln144 are Periplasmic-facing. Cys104 and Cys130 are disulfide-bonded. Residues Trp145 to Ala163 form a helical membrane-spanning segment. Topologically, residues Gln164–Met176 are cytoplasmic.

This sequence belongs to the DsbB family.

The protein resides in the cell inner membrane. Required for disulfide bond formation in some periplasmic proteins. Acts by oxidizing the DsbA protein. The chain is Disulfide bond formation protein B from Photobacterium profundum (strain SS9).